We begin with the raw amino-acid sequence, 198 residues long: Putative pseudouridine methyltransferase (198 aa).

Residues L132 and C186 each contribute to the S-adenosyl-L-methionine site.

This sequence belongs to the methyltransferase superfamily. TrmY family.

It is found in the cytoplasm. In Shewanella frigidimarina (strain NCIMB 400), this protein is Putative pseudouridine methyltransferase.